Here is a 96-residue protein sequence, read N- to C-terminus: Auxin-responsive protein SAUR29 (96 aa).

It belongs to the ARG7 family.

It localises to the cell membrane. Functionally, functions as a positive effector of cell expansion through modulation of auxin transport. Involved in thermo-responsiveness of plant architecture. Enhances plasma membrane H(+)-ATPase. The polypeptide is Auxin-responsive protein SAUR29 (Arabidopsis thaliana (Mouse-ear cress)).